Consider the following 301-residue polypeptide: Probable alpha-L-glutamate ligase (301 aa).

An ATP-grasp domain is found at 104–287; it reads LQLLARKGIG…VAGQLIDYIE (184 aa). Residues Lys-141, 178–179, Asp-187, and 211–213 each bind ATP; these read EF and RSN. Positions 248, 260, and 262 each coordinate Mg(2+). 3 residues coordinate Mn(2+): Asp-248, Glu-260, and Asn-262.

This sequence belongs to the RimK family. It depends on Mg(2+) as a cofactor. Mn(2+) serves as cofactor.

This Maridesulfovibrio salexigens (strain ATCC 14822 / DSM 2638 / NCIMB 8403 / VKM B-1763) (Desulfovibrio salexigens) protein is Probable alpha-L-glutamate ligase.